The primary structure comprises 161 residues: Nucleotide-binding protein PputGB1_4497 (161 aa).

It belongs to the YajQ family.

Nucleotide-binding protein. This chain is Nucleotide-binding protein PputGB1_4497, found in Pseudomonas putida (strain GB-1).